The primary structure comprises 302 residues: Oxygen-dependent coproporphyrinogen-III oxidase (302 aa).

A substrate-binding site is contributed by S94. A divalent metal cation-binding residues include H98 and H108. H108 functions as the Proton donor in the catalytic mechanism. 110-112 (NVR) provides a ligand contact to substrate. Positions 147 and 177 each coordinate a divalent metal cation. An important for dimerization region spans residues 242–277 (YVEFNLVYDRGTLFGLQTGGRTESILMSMPPLARWE). 260-262 (GGR) contributes to the substrate binding site.

The protein belongs to the aerobic coproporphyrinogen-III oxidase family. Homodimer. A divalent metal cation serves as cofactor.

The protein localises to the cytoplasm. The catalysed reaction is coproporphyrinogen III + O2 + 2 H(+) = protoporphyrinogen IX + 2 CO2 + 2 H2O. It participates in porphyrin-containing compound metabolism; protoporphyrin-IX biosynthesis; protoporphyrinogen-IX from coproporphyrinogen-III (O2 route): step 1/1. Functionally, involved in the heme biosynthesis. Catalyzes the aerobic oxidative decarboxylation of propionate groups of rings A and B of coproporphyrinogen-III to yield the vinyl groups in protoporphyrinogen-IX. This chain is Oxygen-dependent coproporphyrinogen-III oxidase, found in Aeromonas salmonicida (strain A449).